The primary structure comprises 66 residues: Large ribosomal subunit protein bL35 (66 aa).

Belongs to the bacterial ribosomal protein bL35 family.

In Ruegeria sp. (strain TM1040) (Silicibacter sp.), this protein is Large ribosomal subunit protein bL35.